Here is a 646-residue protein sequence, read N- to C-terminus: Acetyl-coenzyme A synthetase (646 aa).

Residues 189–192 (RGPK), T307, and N331 each bind CoA. ATP contacts are provided by residues 383-385 (GEP), 407-412 (DTWWQT), D496, and R511. S519 contacts CoA. Position 522 (R522) interacts with ATP. Residues V533, H535, and V538 each contribute to the Mg(2+) site. R580 serves as a coordination point for CoA. K605 carries the N6-acetyllysine modification.

Belongs to the ATP-dependent AMP-binding enzyme family. The cofactor is Mg(2+). In terms of processing, acetylated. Deacetylation by the SIR2-homolog deacetylase activates the enzyme.

The enzyme catalyses acetate + ATP + CoA = acetyl-CoA + AMP + diphosphate. In terms of biological role, catalyzes the conversion of acetate into acetyl-CoA (AcCoA), an essential intermediate at the junction of anabolic and catabolic pathways. AcsA undergoes a two-step reaction. In the first half reaction, AcsA combines acetate with ATP to form acetyl-adenylate (AcAMP) intermediate. In the second half reaction, it can then transfer the acetyl group from AcAMP to the sulfhydryl group of CoA, forming the product AcCoA. This is Acetyl-coenzyme A synthetase from Desulfatibacillum aliphaticivorans.